Reading from the N-terminus, the 393-residue chain is Methylthioribose kinase (393 aa).

ATP contacts are provided by residues N38, K53, and 107-109; that span reads EDL. D225 lines the substrate pocket. 242–244 contributes to the ATP binding site; the sequence is DPE. A substrate-binding site is contributed by R332.

The protein belongs to the methylthioribose kinase family. Homodimer.

The enzyme catalyses 5-(methylsulfanyl)-D-ribose + ATP = 5-(methylsulfanyl)-alpha-D-ribose 1-phosphate + ADP + H(+). The protein operates within amino-acid biosynthesis; L-methionine biosynthesis via salvage pathway; S-methyl-5-thio-alpha-D-ribose 1-phosphate from S-methyl-5'-thioadenosine (hydrolase route): step 2/2. Its function is as follows. Catalyzes the phosphorylation of methylthioribose into methylthioribose-1-phosphate. This chain is Methylthioribose kinase, found in Bacillus cereus (strain B4264).